Consider the following 354-residue polypeptide: Acyl-CoA-binding domain-containing protein 2 (354 aa).

The chain crosses the membrane as a helical; Signal-anchor span at residues Val-11 to Phe-31. The tract at residues Ala-75–Trp-96 is disordered. Positions Ala-86–Trp-96 are enriched in acidic residues. Residues Leu-104–Asp-194 enclose the ACB domain. An acyl-CoA-binding positions include Tyr-136–Lys-140, Lys-162, and Tyr-181. 2 ANK repeats span residues Glu-265–Ala-294 and Glu-298–Ala-327.

This sequence belongs to the ACBP family. In terms of assembly, interacts (via ankyrin repeats) with HIPP26 and the ethylene-responsive element-binding proteins RAP2-3/EBP and RAP2-12. Interacts with CSE. Mostly expressed in roots and flowers, and, to a lower extent, in stems, pods and leaves (at protein level).

It is found in the cell membrane. The protein localises to the endoplasmic reticulum membrane. Its subcellular location is the peroxisome membrane. Its function is as follows. Binds medium- and long-chain acyl-CoA esters with very high affinity. Can interact in vitro with palmitoyl-CoA, but not with oleoyl-CoA. Binds to lead ions (Pb). May function as an intracellular carrier of acyl-CoA esters. Required for proper phospholipid and, to a lower extent, galactolipid composition. This is Acyl-CoA-binding domain-containing protein 2 (ACBP2) from Arabidopsis thaliana (Mouse-ear cress).